A 310-amino-acid chain; its full sequence is tRNA dimethylallyltransferase (310 aa).

Position 14 to 21 (14 to 21) interacts with ATP; that stretch reads GPTASGKS. 16 to 21 provides a ligand contact to substrate; sequence TASGKS. Interaction with substrate tRNA regions lie at residues 39–42 and 163–167; these read DSMQ and QRIVR.

Belongs to the IPP transferase family. Monomer. Mg(2+) is required as a cofactor.

It carries out the reaction adenosine(37) in tRNA + dimethylallyl diphosphate = N(6)-dimethylallyladenosine(37) in tRNA + diphosphate. Catalyzes the transfer of a dimethylallyl group onto the adenine at position 37 in tRNAs that read codons beginning with uridine, leading to the formation of N6-(dimethylallyl)adenosine (i(6)A). This Brucella suis biovar 1 (strain 1330) protein is tRNA dimethylallyltransferase.